The following is a 595-amino-acid chain: Neuroepithelial cell-transforming gene 1 protein (595 aa).

The residue at position 1 (methionine 1) is an N-acetylmethionine. A disordered region spans residues 1–42 (MEPEPAAQKQPRPRRRSRRVSMLSEEPAAGLPADTPGPAANE). A necessary for nuclear localization region spans residues 1–74 (MEPEPAAQKQ…LKRKRREKDD (74 aa)). Residues 12–19 (RPRRRSRR) carry the Nuclear localization signal motif. Serine 21 is modified (phosphoserine). The Nuclear localization signal signature appears at 66-72 (KRKRREK). Serine 100, serine 106, and serine 122 each carry phosphoserine. The tract at residues 127–151 (GDHRSPASAQKSFSRSTVPTPTKRR) is disordered. Polar residues predominate over residues 133 to 146 (ASAQKSFSRSTVPT). The region spanning 174–356 (KRQEAIYELS…QGVLSDINLK (183 aa)) is the DH domain. Positions 386-501 (VLLCHGELKN…WFNCIRAAIA (116 aa)) constitute a PH domain. Serine 508 carries the phosphoserine modification. A disordered region spans residues 555–595 (CGSSVQTVEDTRNMKAQRPQPGLRRARDKAQSGGKKKETLV).

Interacts with RHOA in its GTP- and GDP-bound states, and with CDC42 in its GTP-bound state. Interacts with the PDZ 1 domain of BAIAP1.

Its subcellular location is the cytoplasm. It localises to the nucleus. In terms of biological role, acts as a guanine nucleotide exchange factor (GEF) for RhoA GTPase. May be involved in activation of the SAPK/JNK pathway. Stimulates genotoxic stress-induced RHOB activity in breast cancer cells leading to their cell death. The sequence is that of Neuroepithelial cell-transforming gene 1 protein (Net1) from Mus musculus (Mouse).